The sequence spans 717 residues: Adhesion cell surface protein MAD1 (717 aa).

The first 19 residues, 1–19, serve as a signal peptide directing secretion; that stretch reads MKSALSVVVAAAGVQQASA. 2 stretches are compositionally biased toward low complexity: residues 237 to 254 and 262 to 274; these read TPVT…QTTT and SKET…QTTP. 2 disordered regions span residues 237 to 392 and 451 to 506; these read TPVT…ATTT and RTQS…TPPC. 8 repeat units span residues 275–286, 287–298, 299–310, 311–328, 329–340, 341–352, 353–364, and 365–376. The segment covering 275 to 366 has biased composition (polar residues); the sequence is GKETTPAQQT…TPAQQTTPGK (92 aa). Low complexity-rich tracts occupy residues 368 to 392 and 484 to 503; these read TTPA…ATTT and QPTG…STQT. The CFEM domain occupies 481–595; that stretch reads TPEQPTGEKP…TQIITVTGTP (115 aa). Disulfide bonds link C513/C546, C524/C532, and C534/C568. D529 provides a ligand contact to heme. Residue N614 is glycosylated (N-linked (GlcNAc...) asparagine). Residues 632–690 are disordered; the sequence is PTPTGGVPNQPPATASVPAGQNPPPVTGQNPPPAVTDQSPPPAITTGTGGVIPPKPTGS. Pro residues predominate over residues 652-674; it reads QNPPPVTGQNPPPAVTDQSPPPA. Residue A695 is the site of GPI-anchor amidated alanine attachment. Positions 696–717 are cleaved as a propeptide — removed in mature form; the sequence is GSGRVGAGLGMVLAVAAFVAAL.

Belongs to the RBT5 family. The GPI-anchor is attached to the protein in the endoplasmic reticulum and serves to target the protein to the cell surface. There, the glucosamine-inositol phospholipid moiety is cleaved off and the GPI-modified mannoprotein is covalently attached via its lipidless GPI glycan remnant to the 1,6-beta-glucan of the outer cell wall layer.

It is found in the secreted. It localises to the cell wall. The protein localises to the cell membrane. Its function is as follows. Cell surface adhesion protein that plays a key role in virulence by allowing adherence to the insect host surface. Required to orientate the cytoskeleton and stimulate the expression of genes involved in the cell cycle. Is also involved in achieving the septin hourglass shape and subsequent separation of cells. This Metarhizium anisopliae (Entomophthora anisopliae) protein is Adhesion cell surface protein MAD1.